The sequence spans 869 residues: Phosphatidylethanolamine N-methyltransferase (869 aa).

Ser-2 carries the N-acetylserine modification. Topologically, residues 2–55 (SSCKTTLSEMVGSVTKDRGTINVEARTRSSNVTFKPPVTHDMVRSLFDPTLKKS) are lumenal. A helical membrane pass occupies residues 56–76 (LLEKCIALAIISNFFICYWVF). Topologically, residues 77-86 (QRFGLQFTKY) are cytoplasmic. Residues 87-107 (FFLVQYLFWRIAYNLGIGLVL) form a helical membrane-spanning segment. At 108–187 (HYQSHYETLT…EINVWLIFRQ (80 aa)) the chain is on the lumenal side. The chain crosses the membrane as a helical span at residues 188–208 (FVDLILMQDFVTYIIYVYLSI). At 209 to 212 (PYSW) the chain is on the cytoplasmic side. Residues 213-233 (VQIFNWRSLLGVILILFNIWV) form a helical membrane-spanning segment. The Lumenal portion of the chain corresponds to 234-258 (KLDAHRVVKDYAWYWGDFFFLEESE). Residues 259–279 (LIFDGVFNISPHPMYSIGYLG) form a helical membrane-spanning segment. At 280 to 291 (YYGLSLICNDYK) the chain is on the cytoplasmic side. Residues 292 to 310 (VLLVSVFGHYSQFLFLKYV) form a helical membrane-spanning segment. At 311–362 (ENPHIERTYGDGTDSDSQMNSRIDDLISKENYDYSRPLINMGLSFNNFNKLR) the chain is on the lumenal side. The chain crosses the membrane as a helical span at residues 363 to 383 (FTDYFTIGTVAALMLGTIMNA). The Cytoplasmic segment spans residues 384–389 (RFINLN). A helical membrane pass occupies residues 390–410 (YLFITVFVTKLVSWLFISTIL). Residues 411–439 (YKQSQSKWFTRLFLENGYTQVYSYEQWQF) are Lumenal-facing. The chain crosses the membrane as a helical span at residues 440–460 (IYNYYLVLTYTLMIIHTGLQI). Topologically, residues 461–463 (WSN) are cytoplasmic. A helical transmembrane segment spans residues 464-484 (FSNINNSQLIFGLILVALQTW). Residues 485 to 534 (CDKETRLAISDFGWFYGDFFLSNYISTRKLTSQGIYRYLNHPEAVLGVVG) lie on the Lumenal side of the membrane. Residues 535–555 (VWGTVLMTNFAVTNIILAVLW) traverse the membrane as a helical segment. Residues 556–869 (TLTNFILVKF…DIKQTLDSLA (314 aa)) lie on the Cytoplasmic side of the membrane.

This sequence belongs to the class VI-like SAM-binding methyltransferase superfamily. CHO2 family.

The protein localises to the endoplasmic reticulum membrane. It catalyses the reaction a 1,2-diacyl-sn-glycero-3-phosphoethanolamine + S-adenosyl-L-methionine = a 1,2-diacyl-sn-glycero-3-phospho-N-methylethanolamine + S-adenosyl-L-homocysteine + H(+). The protein operates within phospholipid metabolism; phosphatidylcholine biosynthesis. Its function is as follows. Catalyzes the first step of the methylation pathway of phosphatidylcholine biosynthesis, the SAM-dependent methylation of phosphatidylethanolamine (PE) to phosphatidylmonomethylethanolamine (PMME). Preferentially converts di-C16:1 substrates. The sequence is that of Phosphatidylethanolamine N-methyltransferase from Saccharomyces cerevisiae (strain ATCC 204508 / S288c) (Baker's yeast).